A 462-amino-acid polypeptide reads, in one-letter code: ATP synthase subunit beta (462 aa).

150–157 serves as a coordination point for ATP; it reads GGAGVGKT.

It belongs to the ATPase alpha/beta chains family. As to quaternary structure, F-type ATPases have 2 components, CF(1) - the catalytic core - and CF(0) - the membrane proton channel. CF(1) has five subunits: alpha(3), beta(3), gamma(1), delta(1), epsilon(1). CF(0) has three main subunits: a(1), b(2) and c(9-12). The alpha and beta chains form an alternating ring which encloses part of the gamma chain. CF(1) is attached to CF(0) by a central stalk formed by the gamma and epsilon chains, while a peripheral stalk is formed by the delta and b chains. In this bacterium the a and b subunits are transcribed but do not seem to be translated, thus the ATP synthase consists of the alpha, beta, gamma, delta, epsilon and c subunits.

It is found in the cell membrane. It carries out the reaction ATP + H2O + 4 H(+)(in) = ADP + phosphate + 5 H(+)(out). Produces ATP from ADP in the presence of a proton gradient across the membrane. The catalytic sites are hosted primarily by the beta subunits. This Moorella thermoacetica (strain ATCC 39073 / JCM 9320) protein is ATP synthase subunit beta.